We begin with the raw amino-acid sequence, 229 residues long: MAKHSKKYREAAERIDRNNLYTPEEAIALLKSMPAYNFDQTVEAVLRLNVDPRKADQLVRGSVNLPNGTGKTAKVLVFARGPKATEALEAGADIVGDDDLVEKVANGFLDFDSVVATPDMMGKVGRLGRVLGPRGLMPNPKTGTVTMDVTKAIKDIKGGKVDFRVDKNGNLSFLFGKLSFSAEALDQNFRAVADEVKRLKPATVKGRYITKATISSTMNPGIPVDPASI.

Belongs to the universal ribosomal protein uL1 family. As to quaternary structure, part of the 50S ribosomal subunit.

In terms of biological role, binds directly to 23S rRNA. The L1 stalk is quite mobile in the ribosome, and is involved in E site tRNA release. Its function is as follows. Protein L1 is also a translational repressor protein, it controls the translation of the L11 operon by binding to its mRNA. This is Large ribosomal subunit protein uL1 from Bifidobacterium animalis subsp. lactis (strain AD011).